A 304-amino-acid polypeptide reads, in one-letter code: E3 ubiquitin-protein ligase RNF115 (304 aa).

Ala2 is modified (N-acetylalanine). A disordered region spans residues 95-138; that stretch reads PLDQDNRANERGHQTHTDFWGARPPRLPLGRRYRSRGSSRPDRS. Positions 98 to 110 are enriched in basic and acidic residues; the sequence is QDNRANERGHQTH. Ser132 and Ser133 each carry phosphoserine; by PKB/AKT1. The RING-type zinc finger occupies 228-269; the sequence is CPVCKEDYTVEEEVRQLPCNHFFHSSCIVPWLELHDTCPVCR. A disordered region spans residues 272 to 304; the sequence is LNGEDSTRQSQSTEASASNRFSNDSQLHDRWTF. Residues 279–296 show a composition bias toward polar residues; that stretch reads RQSQSTEASASNRFSNDS.

Interacts with RAB7A. Interacts with EGFR and FLT3. Interacts with BST2. Interacts with STX17. Interacts with YWHAE. Phosphorylated by AKT1, allowing association with the 14-3-3 chaperones that facilitates associating with TLRs. In terms of processing, RING-type zinc finger-dependent and E2-dependent autoubiquitination. Post-translationally, deubiquitinated by USP9X; antogonizing its autoubiquitination and subsequent proteasomal degradation. In terms of tissue distribution, expressed at extremely low levels in normal breast, prostate, lung, colon. Higher levels of expression are detected in heart, skeletal muscle, testis as well as in breast and prostate cancer cells.

It is found in the cytoplasm. The protein resides in the nucleus. It localises to the endoplasmic reticulum. Its subcellular location is the golgi apparatus. It catalyses the reaction S-ubiquitinyl-[E2 ubiquitin-conjugating enzyme]-L-cysteine + [acceptor protein]-L-lysine = [E2 ubiquitin-conjugating enzyme]-L-cysteine + N(6)-ubiquitinyl-[acceptor protein]-L-lysine.. The protein operates within protein modification; protein ubiquitination. Its function is as follows. E3 ubiquitin-protein ligase that catalyzes the 'Lys-48'- and/or 'Lys-63'-linked polyubiquitination of various substrates and thereby plays a role in a number of signaling pathways including autophagy, innate immunity, cell proliferation and cell death. Plays a role in the endosomal trafficking and degradation of membrane receptors including EGFR, FLT3, MET and CXCR4 through their polyubiquitination. Participates together with BST2 in antiviral immunity by facilitating the internalization of HIV-1 virions into intracellular vesicles leading to their lysosomal degradation. Also possesses an antiviral activity independently of BST2 by promoting retroviral GAG proteins ubiquitination, redistribution to endo-lysosomal compartments and, ultimately, lysosomal degradation. Catalyzes distinct types of ubiquitination on MAVS and STING1 at different phases of viral infection to promote innate antiviral response. Mediates the 'Lys-48'-linked ubiquitination of MAVS leading to its proteasomal degradation and ubiquitinates STING1 via 'Lys-63'-linked polyubiquitination, critical for its oligomerization and the subsequent recruitment of TBK1. Plays a positive role in the autophagosome-lysosome fusion by interacting with STX17 and enhancing its stability without affecting 'Lys-48'- or 'Lys-63'-linked polyubiquitination levels, which in turn promotes autophagosome maturation. Negatively regulates TLR-induced expression of proinflammatory cytokines by catalyzing 'Lys-11'-linked ubiquitination of RAB1A and RAB13 to inhibit post-ER trafficking of TLRs to the Golgi by RAB1A and subsequently from the Golgi apparatus to the cell surface by RAB13. This chain is E3 ubiquitin-protein ligase RNF115, found in Homo sapiens (Human).